A 148-amino-acid polypeptide reads, in one-letter code: Globin, monomeric component M-IV (148 aa).

A Globin domain is found at 2–147 (GLSAAQRQVV…ISGALISGLQ (146 aa)). Residue histidine 91 coordinates heme b.

In terms of assembly, monomer.

This chain is Globin, monomeric component M-IV, found in Glycera dibranchiata (Bloodworm).